The primary structure comprises 143 residues: Large ribosomal subunit protein uL13 (143 aa).

It belongs to the universal ribosomal protein uL13 family. Part of the 50S ribosomal subunit.

This protein is one of the early assembly proteins of the 50S ribosomal subunit, although it is not seen to bind rRNA by itself. It is important during the early stages of 50S assembly. In Clostridioides difficile (strain 630) (Peptoclostridium difficile), this protein is Large ribosomal subunit protein uL13.